Reading from the N-terminus, the 977-residue chain is Phosphatidylinositol 4-kinase PIK1alpha (977 aa).

Residues 1–125 form the PIK helical domain; sequence MSADITETPN…QAVRNLITKI (125 aa). The interval 205-261 is disordered; sequence MSADIPKGSHSDDETATSSSIKPSLSRSASVPRRNTKKTSLSFSSDESEAYTTDDDD. Polar residues predominate over residues 220–233; sequence ATSSSIKPSLSRSA. A compositionally biased stretch (acidic residues) spans 250 to 261; sequence DESEAYTTDDDD. Residues 679-960 form the PI3K/PI4K catalytic domain; that stretch reads EDWNTKKQRI…FLIGKSLGSM (282 aa). The interval 685-691 is G-loop; it reads KQRIKKS. The interval 826 to 834 is catalytic loop; the sequence is QIKDRHNGN. Residues 845 to 869 form an activation loop region; it reads HIDFGFLLSNSPGSVGFEAAPFKLT.

It belongs to the PI3/PI4-kinase family. Type III PI4K subfamily.

It is found in the nucleus. The enzyme catalyses a 1,2-diacyl-sn-glycero-3-phospho-(1D-myo-inositol) + ATP = a 1,2-diacyl-sn-glycero-3-phospho-(1D-myo-inositol 4-phosphate) + ADP + H(+). Acts on phosphatidylinositol (PI) in the first committed step in the production of the second messenger inositol 1,4,5,-trisphosphate. This is Phosphatidylinositol 4-kinase PIK1alpha (PIKALPHA) from Candida albicans (strain SC5314 / ATCC MYA-2876) (Yeast).